Reading from the N-terminus, the 648-residue chain is MSTFLDMLSGSQCVSLEKCGDVVVSTNDCMIALYCHFCRDLFTQLPEFLRHLQGAHSDVLHFTKEHNVYSVEELMSGEQEDAQSVGHNSSSSDSRGLAKSEDSRATEATEDNSDNSPVKSEEKGSQNEINLLAEVTNILLQTKEKEHINDKLKPENGGFKGPRKKANSESNSLRICNLKSHTIARTSRKRMSIIKNRILRVIDSDLSANHEMKPSEPNSKILITEPIQEANIPGICLETPPKPIPSSSNLSVRKSSLTEANVSLAHTNYAAKKTTPTLPKLLNCAPKPILPSQQAQVHSGSSGIHEVYHISKAASQVPKEMKSFPIEITQIDVFPPRILPETSTTSDKEEDVNAPVENNTRSLYNAQNLPKDKPKKFFKKRGELWMKNEGKITKSKVNPIIVKQVQTSNVKSSPGKTQIRSSDKTKCFASEFNSTKNRKLKMENFIALKKEDPCSIRSIRLNKMATIGNCEILKVVGLPAITDNQIEDTLLQDELETMRKKADQFSKIYRKYDSIWNYRKIVPPGKPEHISQKMFALTREVNQTMGCNLPNSAIKNIINQISVWHYNIYTKNIVLDTISETARYTLNLFSFLPVSFAYFCKCCDDIFTLNEDYIRHLVSQQARYQCTKCIKTFKYQGHYDKHMRTVHP.

Residues 33 to 56 (LYCHFCRDLFTQLPEFLRHLQGAH) form a C2H2-type 1 zinc finger. 2 disordered regions span residues 76–127 (SGEQ…GSQN) and 146–170 (EHINDKLKPENGGFKGPRKKANSES). Over residues 85 to 94 (VGHNSSSSDS) the composition is skewed to polar residues. Over residues 96-107 (GLAKSEDSRATE) the composition is skewed to basic and acidic residues. Residues 598–620 (YFCKCCDDIFTLNEDYIRHLVSQ) form a C2H2-type 2; degenerate zinc finger. The segment at 624 to 647 (YQCTKCIKTFKYQGHYDKHMRTVH) adopts a C2H2-type 3 zinc-finger fold.

Belongs to the Teflon family.

The protein localises to the nucleus. It localises to the chromosome. Functionally, specifically required in males for proper segregation of autosomal bivalents at meiosis I. Expression is required in the male germ line prior to spermatocyte stage S4. May have a role as a bridging molecule maintaining adhesion to hold autosome bivalents together via heterochromatic connections. In Drosophila yakuba (Fruit fly), this protein is Protein teflon.